Here is a 259-residue protein sequence, read N- to C-terminus: Global transcriptional regulator CodY (259 aa).

The GAF domain stretch occupies residues 1–155; it reads MTLLEKTRKI…GGTVVGMEIL (155 aa). Residues 203–222 constitute a DNA-binding region (H-T-H motif); the sequence is ASKIADRVGITRSVIVNALR.

The protein belongs to the CodY family.

It is found in the cytoplasm. DNA-binding global transcriptional regulator which is involved in the adaptive response to starvation and acts by directly or indirectly controlling the expression of numerous genes in response to nutrient availability. During rapid exponential growth, CodY is highly active and represses genes whose products allow adaptation to nutrient depletion. This chain is Global transcriptional regulator CodY, found in Listeria welshimeri serovar 6b (strain ATCC 35897 / DSM 20650 / CCUG 15529 / CIP 8149 / NCTC 11857 / SLCC 5334 / V8).